Consider the following 472-residue polypeptide: Adenosylhomocysteinase (472 aa).

3 residues coordinate substrate: threonine 62, aspartate 137, and glutamate 197. Position 198-200 (198-200 (TTT)) interacts with NAD(+). The substrate site is built by lysine 227 and aspartate 231. Residues asparagine 232, 261-266 (GYGDVG), glutamate 284, asparagine 319, 340-342 (IGH), and asparagine 385 contribute to the NAD(+) site.

It belongs to the adenosylhomocysteinase family. It depends on NAD(+) as a cofactor.

The protein localises to the cytoplasm. It carries out the reaction S-adenosyl-L-homocysteine + H2O = L-homocysteine + adenosine. Its pathway is amino-acid biosynthesis; L-homocysteine biosynthesis; L-homocysteine from S-adenosyl-L-homocysteine: step 1/1. Functionally, may play a key role in the regulation of the intracellular concentration of adenosylhomocysteine. The chain is Adenosylhomocysteinase from Bordetella bronchiseptica (strain ATCC BAA-588 / NCTC 13252 / RB50) (Alcaligenes bronchisepticus).